The primary structure comprises 247 residues: Eukaryotic translation initiation factor 6-1 (247 aa).

Belongs to the eIF-6 family. As to quaternary structure, monomer. Associates with the 60S ribosomal subunit.

It localises to the cytoplasm. The protein localises to the nucleus. It is found in the nucleolus. In terms of biological role, binds to the 60S ribosomal subunit and prevents its association with the 40S ribosomal subunit to form the 80S initiation complex in the cytoplasm. May also be involved in ribosome biogenesis. This Arabidopsis thaliana (Mouse-ear cress) protein is Eukaryotic translation initiation factor 6-1.